A 123-amino-acid chain; its full sequence is Fluoride-specific ion channel FluC (123 aa).

The next 4 membrane-spanning stretches (helical) occupy residues 5–25 (IIAL…YISG), 35–55 (IGTL…YGLL), 67–87 (IFLG…SYET), and 100–120 (FANI…GFIL). The Na(+) site is built by G75 and S78.

The protein belongs to the fluoride channel Fluc/FEX (TC 1.A.43) family.

The protein resides in the cell membrane. It catalyses the reaction fluoride(in) = fluoride(out). With respect to regulation, na(+) is not transported, but it plays an essential structural role and its presence is essential for fluoride channel function. In terms of biological role, fluoride-specific ion channel. Important for reducing fluoride concentration in the cell, thus reducing its toxicity. The protein is Fluoride-specific ion channel FluC of Pyrococcus horikoshii (strain ATCC 700860 / DSM 12428 / JCM 9974 / NBRC 100139 / OT-3).